The primary structure comprises 878 residues: Pyruvate, phosphate dikinase (878 aa).

Residues 1–347 (MKKLIYYFGS…LYILQTRTAK (347 aa)) are N-terminal. ATP is bound at residue Arg-96. Residues 348-404 (RTAIAAIKIAVQMVEEKLISKEQALMRIDPESLNQLLHTRIDYSKGLTSIADGLPAS) are linker 1. The central stretch occupies residues 405-502 (PGAATGIIVF…ILKQDDIITI (98 aa)). Thr-457 is modified (phosphothreonine; by PDRP1). Catalysis depends on His-459, which acts as the Tele-phosphohistidine intermediate. Residues 503–537 (DGGTGKVFLGAVPLIQPTFSEESKLILEWADETSK) form a linker 2 region. The C-terminal stretch occupies residues 538-878 (LKIRTNAETV…AAAQAKIKHG (341 aa)). Arg-565, Arg-621, Glu-749, Gly-770, Thr-771, Asn-772, and Asp-773 together coordinate substrate. Glu-749 contacts Mg(2+). Asp-773 contacts Mg(2+). Cys-835 (proton donor) is an active-site residue.

It belongs to the PEP-utilizing enzyme family. In terms of assembly, homodimer. Requires Mg(2+) as cofactor. Phosphorylation of Thr-457 in the dark inactivates the enzyme. Dephosphorylation upon light stimulation reactivates the enzyme.

It carries out the reaction pyruvate + phosphate + ATP = phosphoenolpyruvate + AMP + diphosphate + H(+). With respect to regulation, activated by light-induced dephosphorylation. Inhibited by dark-induced phosphorylation. Both reactions are catalyzed by PDRP1. Its function is as follows. Catalyzes the reversible phosphorylation of pyruvate and phosphate. This Rickettsia bellii (strain RML369-C) protein is Pyruvate, phosphate dikinase (ppdK).